The primary structure comprises 250 residues: 3-deoxy-manno-octulosonate cytidylyltransferase (250 aa).

The protein belongs to the KdsB family.

The protein localises to the cytoplasm. It catalyses the reaction 3-deoxy-alpha-D-manno-oct-2-ulosonate + CTP = CMP-3-deoxy-beta-D-manno-octulosonate + diphosphate. It participates in nucleotide-sugar biosynthesis; CMP-3-deoxy-D-manno-octulosonate biosynthesis; CMP-3-deoxy-D-manno-octulosonate from 3-deoxy-D-manno-octulosonate and CTP: step 1/1. Its pathway is bacterial outer membrane biogenesis; lipopolysaccharide biosynthesis. Activates KDO (a required 8-carbon sugar) for incorporation into bacterial lipopolysaccharide in Gram-negative bacteria. The protein is 3-deoxy-manno-octulosonate cytidylyltransferase of Janthinobacterium sp. (strain Marseille) (Minibacterium massiliensis).